The following is a 432-amino-acid chain: Adenylosuccinate synthetase (432 aa).

Residues 13-19 (GDEGKGK) and 41-43 (GHT) each bind GTP. Asp-14 functions as the Proton acceptor in the catalytic mechanism. Asp-14 and Gly-41 together coordinate Mg(2+). IMP contacts are provided by residues 14–17 (DEGK), 39–42 (NAGH), Thr-130, Arg-144, Gln-225, Thr-240, and Arg-304. The active-site Proton donor is His-42. 300 to 306 (AVTGRPR) is a binding site for substrate. GTP-binding positions include Arg-306, 332–334 (KLD), and 415–417 (STG).

This sequence belongs to the adenylosuccinate synthetase family. In terms of assembly, homodimer. The cofactor is Mg(2+).

It is found in the cytoplasm. It carries out the reaction IMP + L-aspartate + GTP = N(6)-(1,2-dicarboxyethyl)-AMP + GDP + phosphate + 2 H(+). It participates in purine metabolism; AMP biosynthesis via de novo pathway; AMP from IMP: step 1/2. Its function is as follows. Plays an important role in the de novo pathway of purine nucleotide biosynthesis. Catalyzes the first committed step in the biosynthesis of AMP from IMP. This chain is Adenylosuccinate synthetase, found in Glaesserella parasuis serovar 5 (strain SH0165) (Haemophilus parasuis).